Reading from the N-terminus, the 176-residue chain is uncharacterized protein (176 aa).

An N-terminal signal peptide occupies residues 1–22 (MKYNNIIFLGLCLGLTTYSALS). The cysteines at positions 38 and 78 are disulfide-linked.

The protein belongs to the fimbrial protein family.

The protein resides in the fimbrium. This is an uncharacterized protein from Escherichia coli (strain K12).